Consider the following 185-residue polypeptide: Ribosome-recycling factor (185 aa).

It belongs to the RRF family.

The protein localises to the cytoplasm. Its function is as follows. Responsible for the release of ribosomes from messenger RNA at the termination of protein biosynthesis. May increase the efficiency of translation by recycling ribosomes from one round of translation to another. The chain is Ribosome-recycling factor from Listeria monocytogenes serotype 4a (strain HCC23).